The chain runs to 459 residues: Cysteine--tRNA ligase (459 aa).

Cysteine 27 contributes to the Zn(2+) binding site. Residues 29–39 carry the 'HIGH' region motif; that stretch reads ITVYDDCHIGH. Positions 208, 233, and 237 each coordinate Zn(2+). The 'KMSKS' region signature appears at 265–269; that stretch reads KMSKS. Lysine 268 is an ATP binding site.

Belongs to the class-I aminoacyl-tRNA synthetase family. As to quaternary structure, monomer. Zn(2+) is required as a cofactor.

Its subcellular location is the cytoplasm. The catalysed reaction is tRNA(Cys) + L-cysteine + ATP = L-cysteinyl-tRNA(Cys) + AMP + diphosphate. In Francisella philomiragia subsp. philomiragia (strain ATCC 25017 / CCUG 19701 / FSC 153 / O#319-036), this protein is Cysteine--tRNA ligase.